Reading from the N-terminus, the 446-residue chain is Delta(8)-fatty-acid desaturase (446 aa).

The Cytochrome b5 heme-binding domain maps to 5 to 89; sequence KKYISVGELE…LEDYLVSEIS (85 aa). Heme is bound by residues histidine 40 and histidine 63. The next 2 membrane-spanning stretches (helical) occupy residues 112–132 and 136–156; these read VIYC…GVLC and LWVH…AAYL. Positions 158–162 match the Histidine box-1 motif; the sequence is HDSGH. 4 consecutive transmembrane segments (helical) span residues 174–195, 253–273, 282–302, and 309–329; these read FAQV…KWTH, IYLV…LLLF, ALNI…VSCL, and VLFV…FTLN. A Histidine box-2 motif is present at residues 195 to 199; the sequence is HNAHH. The short motif at 372–376 is the Histidine box-3 element; that stretch reads QLEHH.

Belongs to the fatty acid desaturase type 1 family. Fe cation serves as cofactor. As to expression, expressed only in young leaves.

Its subcellular location is the membrane. It catalyses the reaction an N-acyl-(4R)-4-hydroxysphinganine + 2 Fe(II)-[cytochrome b5] + O2 + 2 H(+) = a (4R,8E)-4-hydroxysphingenine ceramide + 2 Fe(III)-[cytochrome b5] + 2 H2O. The catalysed reaction is an N-acyl-(4R)-4-hydroxysphinganine + 2 Fe(II)-[cytochrome b5] + O2 + 2 H(+) = a (4R,8Z)-4-hydroxysphing-8-enine ceramide + 2 Fe(III)-[cytochrome b5] + 2 H2O. Plays a major role as delta(8)-fatty-acid desaturase which introduces a double bond at the 8-position in the long-chain base (LCB) of ceramides with or without a hydroxy group at the 4-position. The enzyme produces both the 8E and 8Z isomers (in a 4:1 ratio). This structural modification contributes to the quantitative partitioning of ceramides between the two major sphingolipid classes, glucosylceramides and glycosylinositolphosphoryl ceramides. Sphingolipids are important membrane components involved in environmental stress responses, such as resistance to chilling, and act as cell signaling molecules. This Borago officinalis (Bourrache) protein is Delta(8)-fatty-acid desaturase (sld1).